A 113-amino-acid polypeptide reads, in one-letter code: Na(+)/H(+) antiporter subunit C1 (113 aa).

3 helical membrane passes run 1-21 (MEIIMIFVCGILASISVYLVL), 28-48 (IVMGTTLITHASNLFLITMGG), and 72-92 (LILTAIVIAFATTAFFLVLAF).

This sequence belongs to the CPA3 antiporters (TC 2.A.63) subunit C family. May form a heterooligomeric complex that consists of seven subunits: mnhA1, mnhB1, mnhC1, mnhD1, mnhE1, mnhF1 and mnhG1.

It localises to the cell membrane. Functionally, mnh complex is a Na(+)/H(+) antiporter involved in Na(+) excretion. This is Na(+)/H(+) antiporter subunit C1 (mnhC1) from Staphylococcus haemolyticus (strain JCSC1435).